The following is a 292-amino-acid chain: Probable serine/threonine-protein kinase FPV226 (292 aa).

A Protein kinase domain is found at 14 to 292; the sequence is WKIDKLIGCG…DLLRQLVNSL (279 aa). ATP is bound by residues 20–28 and K43; that span reads IGCGGFGCV. The Proton acceptor role is filled by D147.

The protein belongs to the protein kinase superfamily. Ser/Thr protein kinase family. Poxviruses subfamily.

The catalysed reaction is L-seryl-[protein] + ATP = O-phospho-L-seryl-[protein] + ADP + H(+). It carries out the reaction L-threonyl-[protein] + ATP = O-phospho-L-threonyl-[protein] + ADP + H(+). The sequence is that of Probable serine/threonine-protein kinase FPV226 from Vertebrata (FPV).